The sequence spans 1514 residues: Mitogen-activated protein kinase-binding protein 1 (1514 aa).

Position 2 is an N-acetylalanine (A2). WD repeat units lie at residues 88–129, 132–173, 175–213, 276–315, 342–381, 387–436, 477–516, 519–561, 565–606, 614–653, 659–698, and 701–740; these read SSRK…QVAE, EHKY…VVAS, KVSS…TSKV, DSFT…FLST, ARYP…KVGK, YHSS…VHGS, DPRV…EMLK, AHDS…SLQQ, EHSS…DGVQ, VRKT…QKKL, GEDG…CVAT, and GHSE…TISM. Disordered stretches follow at residues 748–804, 880–925, 951–1256, and 1299–1336; these read RQRQ…PALP, PSLQ…SQPC, EDGI…SSMA, and DIPK…GLGK. A compositionally biased stretch (acidic residues) spans 789 to 800; the sequence is KEGEDEGTEEEL. 2 stretches are compositionally biased toward polar residues: residues 905–925 and 961–971; these read LETS…SQPC and DNPTMDTSEFQ. Residues 996–1011 show a composition bias toward low complexity; it reads DSACSVDYSSSCLSSP. The span at 1032 to 1048 shows a compositional bias: acidic residues; that stretch reads DLEEPAEGDEEEEEEEG. The segment covering 1113 to 1126 has biased composition (low complexity); the sequence is PSPSSSSLALMSRP. Polar residues-rich tracts occupy residues 1188 to 1200 and 1245 to 1256; these read SPFS…QSVH and HSYQNPTTSSMA. Position 1198 is a phosphoserine (S1198).

In terms of assembly, can form homodimers (via C-terminus). Interacts (via C-terminus) with WDR62 (via C-terminus). Interacts with MAPK9. Interacts (via N-terminus) with NOD2; the interaction is enhanced in presence of muramyl dipeptide (MDP). Interacts with MAPK10. Expressed in intestinal mucosa, where it is detected in epithelial cells, endothelial cells, smooth muscle cells and immune cells, such as lymphocytes. Expressed in kidney.

The protein resides in the cytoplasm. It is found in the nucleus. The protein localises to the cytoskeleton. It localises to the spindle pole. Functionally, negative regulator of NOD2 function. It down-regulates NOD2-induced processes such as activation of NF-kappa-B signaling, IL8 secretion and antibacterial response. Involved in JNK signaling pathway. This chain is Mitogen-activated protein kinase-binding protein 1 (MAPKBP1), found in Homo sapiens (Human).